Reading from the N-terminus, the 660-residue chain is Galactocerebrosidase (660 aa).

An N-terminal signal peptide occupies residues 1–18 (MQTHNFLCIISVILGCSA). Substrate contacts are provided by Thr-87 and Trp-129. A glycan (N-linked (GlcNAc...) asparagine) is linked at Asn-147. Asn-175 is a binding site for substrate. Residue Glu-176 is the Proton donor/acceptor of the active site. Residue Glu-251 is the Nucleophile of the active site. A disulfide bond links Cys-264 and Cys-371. N-linked (GlcNAc...) asparagine glycans are attached at residues Asn-293 and Asn-356. Substrate is bound at residue Arg-373. 6 N-linked (GlcNAc...) asparagine glycosylation sites follow: Asn-413, Asn-465, Asn-495, Asn-499, Asn-537, and Asn-578.

It belongs to the glycosyl hydrolase 59 family.

It is found in the lysosome. It carries out the reaction a beta-D-galactosyl-(1&lt;-&gt;1')-N-acylsphing-4-enine + H2O = an N-acylsphing-4-enine + D-galactose. It catalyses the reaction beta-D-galactosyl-(1&lt;-&gt;1)-sphing-4-enine + H2O = sphing-4-enine + D-galactose. The catalysed reaction is a D-galactosylceramide + H2O = an N-acyl-sphingoid base + D-galactose. In terms of biological role, hydrolyzes the galactose ester bonds of glycolipids such as galactosylceramide and galactosylsphingosine. This chain is Galactocerebrosidase, found in Danio rerio (Zebrafish).